A 221-amino-acid polypeptide reads, in one-letter code: GTPase Obg (221 aa).

Residues 1-61 (PSALRLVLLN…LKYKLLEIVQ (61 aa)) enclose the OBG-type G domain. Residues 10 to 13 (NKAD) and 42 to 44 (SAV) contribute to the GTP site. In terms of domain architecture, OCT spans 82–162 (VVHRTKGQFQ…IGGISFEWEP (81 aa)).

Belongs to the TRAFAC class OBG-HflX-like GTPase superfamily. OBG GTPase family. In terms of assembly, monomer. Requires Mg(2+) as cofactor.

The protein localises to the cytoplasm. Functionally, an essential GTPase which binds GTP, GDP and possibly (p)ppGpp with moderate affinity, with high nucleotide exchange rates and a fairly low GTP hydrolysis rate. Plays a role in control of the cell cycle, stress response, ribosome biogenesis and in those bacteria that undergo differentiation, in morphogenesis control. The protein is GTPase Obg of Corynebacterium melassecola.